The chain runs to 720 residues: Putative glutamine--fructose-6-phosphate aminotransferase [isomerizing] (720 aa).

Residue C2 is the Nucleophile; for GATase activity of the active site. Residues 2–321 (CGIFGYCNFL…DNDIAHIYDG (320 aa)) enclose the Glutamine amidotransferase type-2 domain. A compositionally biased stretch (polar residues) spans 266-280 (STTSTFNHGSSTETP). The disordered stretch occupies residues 266–285 (STTSTFNHGSSTETPAENGL). 2 consecutive SIS domains span residues 393-532 (WLTE…DLVS) and 565-710 (CDKK…VDLP).

The catalysed reaction is D-fructose 6-phosphate + L-glutamine = D-glucosamine 6-phosphate + L-glutamate. Its pathway is nucleotide-sugar biosynthesis; UDP-N-acetyl-alpha-D-glucosamine biosynthesis; alpha-D-glucosamine 6-phosphate from D-fructose 6-phosphate: step 1/1. In terms of biological role, involved in amino sugar synthesis (formation of chitin, supplies the amino sugars of asparagine-linked oligosaccharides of glycoproteins). This Saccharomyces cerevisiae (strain RM11-1a) (Baker's yeast) protein is Putative glutamine--fructose-6-phosphate aminotransferase [isomerizing].